Consider the following 44-residue polypeptide: MFKIFNTKFMRSAPIVAAIWISLTAGIIIEFNRFFPDLLFHPMS.

Residues 9 to 29 (FMRSAPIVAAIWISLTAGIII) form a helical membrane-spanning segment.

Belongs to the PsaJ family.

Its subcellular location is the cellular thylakoid membrane. Its function is as follows. May help in the organization of the PsaE and PsaF subunits. The sequence is that of Photosystem I reaction center subunit IX from Prochlorococcus marinus (strain MIT 9515).